Here is a 233-residue protein sequence, read N- to C-terminus: 7-cyano-7-deazaguanine synthase (233 aa).

Residue 8–18 participates in ATP binding; sequence FSGGQDSTTCL. 4 residues coordinate Zn(2+): cysteine 188, cysteine 197, cysteine 200, and cysteine 203.

It belongs to the QueC family. It depends on Zn(2+) as a cofactor.

It carries out the reaction 7-carboxy-7-deazaguanine + NH4(+) + ATP = 7-cyano-7-deazaguanine + ADP + phosphate + H2O + H(+). The protein operates within purine metabolism; 7-cyano-7-deazaguanine biosynthesis. Catalyzes the ATP-dependent conversion of 7-carboxy-7-deazaguanine (CDG) to 7-cyano-7-deazaguanine (preQ(0)). The protein is 7-cyano-7-deazaguanine synthase of Klebsiella pneumoniae (strain 342).